Here is a 103-residue protein sequence, read N- to C-terminus: Putative glutaredoxin-C12 (103 aa).

The Glutaredoxin domain occupies 1–102; it reads MERVRDLASE…QMLKASNAIW (102 aa). A disulfide bridge links Cys21 with Cys24.

The protein belongs to the glutaredoxin family. CC-type subfamily.

It is found in the cytoplasm. In terms of biological role, has a glutathione-disulfide oxidoreductase activity in the presence of NADPH and glutathione reductase. Reduces low molecular weight disulfides and proteins. This is Putative glutaredoxin-C12 (GRXC12) from Arabidopsis thaliana (Mouse-ear cress).